We begin with the raw amino-acid sequence, 151 residues long: Ribosomal RNA large subunit methyltransferase H (151 aa).

S-adenosyl-L-methionine contacts are provided by residues L73, G100, and 119–124 (LTKLTL).

The protein belongs to the RNA methyltransferase RlmH family. Homodimer.

It is found in the cytoplasm. It catalyses the reaction pseudouridine(1915) in 23S rRNA + S-adenosyl-L-methionine = N(3)-methylpseudouridine(1915) in 23S rRNA + S-adenosyl-L-homocysteine + H(+). In terms of biological role, specifically methylates the pseudouridine at position 1915 (m3Psi1915) in 23S rRNA. The sequence is that of Ribosomal RNA large subunit methyltransferase H from Campylobacter hominis (strain ATCC BAA-381 / DSM 21671 / CCUG 45161 / LMG 19568 / NCTC 13146 / CH001A).